A 127-amino-acid polypeptide reads, in one-letter code: Gonadotropin subunit beta-1 (127 aa).

A signal peptide spans 1–22; that stretch reads MHLAVTALCLTLAPVLARASTS. 6 disulfide bridges follow: cysteine 23–cysteine 71, cysteine 37–cysteine 86, cysteine 40–cysteine 124, cysteine 48–cysteine 102, cysteine 52–cysteine 104, and cysteine 107–cysteine 114. N-linked (GlcNAc...) asparagine glycosylation is found at asparagine 27 and asparagine 44.

Belongs to the glycoprotein hormones subunit beta family. Heterodimer of an alpha and a beta chain.

The protein resides in the secreted. In terms of biological role, involved in gametogenesis and steroidogenesis. This is Gonadotropin subunit beta-1 (cgba) from Anguilla japonica (Japanese eel).